A 353-amino-acid polypeptide reads, in one-letter code: Protein RecA (353 aa).

Residue 67-74 (GPESSGKT) participates in ATP binding. Residues 330 to 353 (SNPNSTPDFSVDDSEGVAETNEDF) are disordered. Acidic residues predominate over residues 339–353 (SVDDSEGVAETNEDF).

The protein belongs to the RecA family.

It is found in the cytoplasm. Functionally, can catalyze the hydrolysis of ATP in the presence of single-stranded DNA, the ATP-dependent uptake of single-stranded DNA by duplex DNA, and the ATP-dependent hybridization of homologous single-stranded DNAs. It interacts with LexA causing its activation and leading to its autocatalytic cleavage. The protein is Protein RecA of Shigella sonnei.